Reading from the N-terminus, the 182-residue chain is Fucoxanthin-chlorophyll a-c binding protein D, chloroplastic (182 aa).

Residues 1–4 constitute a chloroplast transit peptide; that stretch reads AMKM. 3 helical membrane-spanning segments follow: residues 46–66, 87–107, and 148–168; these read IAML…PGML, IPPG…LAVM, and GRAA…NNKP.

It belongs to the fucoxanthin chlorophyll protein family. In terms of assembly, the LHC complex of chromophytic algae is composed of fucoxanthin, chlorophyll A and C bound non-covalently by fucoxanthin chlorophyll proteins (FCPs). The ratio of pigments in this LHC is; fucoxanthin: chlorophyll C: chlorophyll A; (0.6-1): (0.1-0.3): (1).

It is found in the plastid. It localises to the chloroplast thylakoid membrane. In terms of biological role, the light-harvesting complex (LHC) functions as a light receptor, it captures and delivers excitation energy to photosystems with which it is closely associated. Energy is transferred from the carotenoid and chlorophyll C (or B) to chlorophyll A and the photosynthetic reaction centers where it is used to synthesize ATP and reducing power. This is Fucoxanthin-chlorophyll a-c binding protein D, chloroplastic (FCPD) from Macrocystis pyrifera (Giant kelp).